A 402-amino-acid chain; its full sequence is Phosphoglycerate kinase (402 aa).

Substrate is bound by residues 21–23 (DFN), arginine 36, 59–62 (HLGR), arginine 119, and arginine 154. Residues lysine 207, glycine 298, glutamate 329, and 356–359 (GGDA) each bind ATP.

Belongs to the phosphoglycerate kinase family. Monomer.

The protein localises to the cytoplasm. The catalysed reaction is (2R)-3-phosphoglycerate + ATP = (2R)-3-phospho-glyceroyl phosphate + ADP. It participates in carbohydrate degradation; glycolysis; pyruvate from D-glyceraldehyde 3-phosphate: step 2/5. This Chlamydia pneumoniae (Chlamydophila pneumoniae) protein is Phosphoglycerate kinase (pgk).